A 223-amino-acid chain; its full sequence is Ras-related protein Rab-37 (223 aa).

The segment covering 1–13 has biased composition (low complexity); the sequence is MTGTPGAATAGDG. The interval 1-22 is disordered; the sequence is MTGTPGAATAGDGEAPERSPPF. Residue threonine 2 is modified to N-acetylthreonine. GTP-binding residues include serine 38, glycine 39, valine 40, glycine 41, lysine 42, threonine 43, cysteine 44, and threonine 62. Threonine 43 is a binding site for Mg(2+). Short sequence motifs (switch) lie at residues 52-67 and 85-102; these read GAFLSGTFIATVGIDS and DTAGQERFRSVTHAYYRD. Mg(2+)-binding residues include threonine 62 and aspartate 85. Glycine 88, asparagine 143, lysine 144, aspartate 146, serine 173, alanine 174, and lysine 175 together coordinate GTP. 2 S-geranylgeranyl cysteine lipidation sites follow: cysteine 219 and cysteine 220. The residue at position 220 (cysteine 220) is a Cysteine methyl ester. The propeptide at 221 to 223 is removed in mature form; it reads SFV.

The protein belongs to the small GTPase superfamily. Rab family. Interacts with RIMS1. Interacts (in GDP-bound form) with RPGR, RPGR functions as guanine exchange factor (GEF). Requires Mg(2+) as cofactor. Expressed in the retina (at protein level). Specifically expressed in the bone marrow mast cells.

Its subcellular location is the cytoplasmic vesicle. It is found in the cell projection. The protein resides in the cilium. The enzyme catalyses GTP + H2O = GDP + phosphate + H(+). Its activity is regulated as follows. Regulated by guanine nucleotide exchange factors (GEFs) including RPGR which promote the exchange of bound GDP for free GTP. Regulated by GTPase activating proteins (GAPs) which increase the GTP hydrolysis activity. Inhibited by GDP dissociation inhibitors (GDIs). The small GTPases Rab are key regulators of intracellular membrane trafficking, from the formation of transport vesicles to their fusion with membranes. Rabs cycle between an inactive GDP-bound form and an active GTP-bound form that is able to recruit to membranes different sets of downstream effectors directly responsible for vesicle formation, movement, tethering and fusion. Acts as an organizer for autophagosome biogenesis in a GTP-dependent manner. Involved in retinal homeostasis by autophagy regulation. The chain is Ras-related protein Rab-37 from Mus musculus (Mouse).